A 188-amino-acid polypeptide reads, in one-letter code: Putative protein SSX6 (188 aa).

2 disordered regions span residues 1-22 and 74-188; these read MNGD…EKRS and KRAT…EDDK. The region spanning 20 to 83 is the KRAB-related domain; sequence KRSKAFDDIA…KRATDSQRND (64 aa). 2 stretches are compositionally biased toward basic and acidic residues: residues 75–96 and 112–122; these read RATD…EVER and MPEKPAEEGSD. Position 123 is a phosphoserine (Ser123). Residues 147 to 156 are compositionally biased toward basic and acidic residues; it reads SSEKIHERSG. Residues 157–170 show a composition bias toward basic residues; sequence PKRGKHAWTHRLRE. Positions 179–188 are enriched in acidic residues; sequence EISDPEEDDK.

It belongs to the SSX family. Not detected in any normal tissues. Expressed in a melanoma cell line.

In terms of biological role, could act as a modulator of transcription. The sequence is that of Putative protein SSX6 from Homo sapiens (Human).